A 436-amino-acid polypeptide reads, in one-letter code: MPKLKVTRGARNQERHAPLAEQILAGDAVRAGTREKRRRHGVEEEEEYVGPRLSRRILQQARQQQEELETEHATGDRPAKPRERATRLGPGVPQDGSDEEDEEWPTLEKAAKMTVVNHQAEVVVDPEDERAIEMFMNKNPPVRRTLADIIMEKLTEKQTEVETVMSEVSGFPMPQLDPRVLEVYRGVREVLCKYRSGILPKAFKIIPALSNWEQILYVTEPEAWTAAAMYQATRIFASNLKERMAQRFYNLVLLPRVRDDIAEYKRLNFHLYMALKKALFKPGAWFKGILIPLCESGTCTLREAIIVGSIISKCSIPVLHSSAAMLKIAEMEYSGASSIFLRLLLDKKYALPYRVLDALVFHFLAFRTEKRQLPVLWHQCLLTLAQRYKADLATEQKEALLELLRLQPHPQLSPEIRRELQSAVPRDVEDVVVTME.

A disordered region spans residues 1 to 105 (MPKLKVTRGA…GSDEEDEEWP (105 aa)). Serine 54 carries the phosphoserine modification. Residues 70 to 86 (TEHATGDRPAKPRERAT) are compositionally biased toward basic and acidic residues. The segment covering 96 to 105 (GSDEEDEEWP) has biased composition (acidic residues). The residue at position 97 (serine 97) is a Phosphoserine. Phosphothreonine is present on threonine 155. A phosphoserine mark is found at serine 166 and serine 413.

The protein belongs to the bystin family. In terms of assembly, binds trophinin, tastin and cytokeratins.

The protein resides in the cytoplasm. It localises to the nucleus. The protein localises to the nucleolus. Required for processing of 20S pre-rRNA precursor and biogenesis of 40S ribosomal subunits. This Rattus norvegicus (Rat) protein is Bystin.